The following is a 137-amino-acid chain: Large ribosomal subunit protein uL16 (137 aa).

It belongs to the universal ribosomal protein uL16 family. Part of the 50S ribosomal subunit.

Functionally, binds 23S rRNA and is also seen to make contacts with the A and possibly P site tRNAs. The sequence is that of Large ribosomal subunit protein uL16 from Streptococcus pneumoniae serotype 2 (strain D39 / NCTC 7466).